The chain runs to 125 residues: Putative glutaredoxin-C2 (125 aa).

Positions 2-103 (AERVARLSSQ…PLLREAGALW (102 aa)) constitute a Glutaredoxin domain. A disulfide bridge connects residues C22 and C25.

Belongs to the glutaredoxin family. CC-type subfamily.

The protein localises to the cytoplasm. Functionally, has a glutathione-disulfide oxidoreductase activity in the presence of NADPH and glutathione reductase. Reduces low molecular weight disulfides and proteins. The chain is Putative glutaredoxin-C2 (GRXC2) from Oryza sativa subsp. japonica (Rice).